The primary structure comprises 384 residues: Dual-specificity RNA methyltransferase RlmN (384 aa).

Catalysis depends on glutamate 105, which acts as the Proton acceptor. A Radical SAM core domain is found at 111-350; the sequence is EDDRATLCVS…TIVRKTRGDD (240 aa). A disulfide bridge connects residues cysteine 118 and cysteine 355. [4Fe-4S] cluster contacts are provided by cysteine 125, cysteine 129, and cysteine 132. Residues 179 to 180, serine 211, 233 to 235, and asparagine 312 each bind S-adenosyl-L-methionine; these read GE and SLH. Residue cysteine 355 is the S-methylcysteine intermediate of the active site.

It belongs to the radical SAM superfamily. RlmN family. It depends on [4Fe-4S] cluster as a cofactor.

It is found in the cytoplasm. It catalyses the reaction adenosine(2503) in 23S rRNA + 2 reduced [2Fe-2S]-[ferredoxin] + 2 S-adenosyl-L-methionine = 2-methyladenosine(2503) in 23S rRNA + 5'-deoxyadenosine + L-methionine + 2 oxidized [2Fe-2S]-[ferredoxin] + S-adenosyl-L-homocysteine. The enzyme catalyses adenosine(37) in tRNA + 2 reduced [2Fe-2S]-[ferredoxin] + 2 S-adenosyl-L-methionine = 2-methyladenosine(37) in tRNA + 5'-deoxyadenosine + L-methionine + 2 oxidized [2Fe-2S]-[ferredoxin] + S-adenosyl-L-homocysteine. Its function is as follows. Specifically methylates position 2 of adenine 2503 in 23S rRNA and position 2 of adenine 37 in tRNAs. m2A2503 modification seems to play a crucial role in the proofreading step occurring at the peptidyl transferase center and thus would serve to optimize ribosomal fidelity. The polypeptide is Dual-specificity RNA methyltransferase RlmN (Shigella boydii serotype 18 (strain CDC 3083-94 / BS512)).